The primary structure comprises 393 residues: MLSILLTLLLSKYALGHEVWFSETFPNESIENWVQSTYNAEKQGEFKVEAGKSPVDPIEDLGLKTTQDARFYGIARKISEPFSNRGKTMVLQFTVKFDKTVSCGGAYIKLLGSDIDPKKFHGESPYKIMFGPDICGMATKKVHVIFNYKGKNHLIKKEIPCKDDLKTHLYTLIVNPNNKYEVLVDNAKVEEGSLEDDWDMLPPKKIDDPNDKKPDDWVDEQFIDDPDDKKPDNWDQPKTIPDMDAKKPDDWDDAMDGEWERPQKDNPEYKGEWTPRRIDNPKYKGEWKPVQIDNPEYKHDPELYVLNDIGYVGFDLWQVDSGSIFDNILITDSPDFAKEEGERLWRKRYDAEVAKEQSSAKDDKEEAEETKERKELPYDAKASDEPSGDHDEL.

A signal peptide spans 1–16; the sequence is MLSILLTLLLSKYALG. The N-linked (GlcNAc...) asparagine glycan is linked to Asn27. A disulfide bond links Cys103 and Cys135. An alpha-D-glucoside contacts are provided by Tyr107, Lys109, Tyr126, and Asp133. Tandem repeats lie at residues 189 to 200, 208 to 219, 225 to 236, 242 to 253, 257 to 267, 271 to 281, and 285 to 295. Residues 189-253 are 4 X 12 AA approximate repeats; that stretch reads VEEGSLEDDW…DAKKPDDWDD (65 aa). The segment at 194-277 is disordered; that stretch reads LEDDWDMLPP…EYKGEWTPRR (84 aa). Over residues 202 to 216 the composition is skewed to basic and acidic residues; that stretch reads PPKKIDDPNDKKPDD. Over residues 217–226 the composition is skewed to acidic residues; sequence WVDEQFIDDP. 2 stretches are compositionally biased toward basic and acidic residues: residues 227 to 249 and 258 to 277; these read DDKKPDNWDQPKTIPDMDAKKPD and EWERPQKDNPEYKGEWTPRR. Residues 257-295 are 3 X 11 AA approximate repeats; the sequence is GEWERPQKDNPEYKGEWTPRRIDNPKYKGEWKPVQIDNP. Asp315 provides a ligand contact to an alpha-D-glucoside. Residues 351-393 are disordered; sequence AEVAKEQSSAKDDKEEAEETKERKELPYDAKASDEPSGDHDEL. Positions 390 to 393 match the Prevents secretion from ER motif; the sequence is HDEL.

Belongs to the calreticulin family.

Its subcellular location is the endoplasmic reticulum lumen. Molecular calcium-binding chaperone promoting folding, oligomeric assembly and quality control in the ER via the calreticulin/calnexin cycle. This lectin may interact transiently with almost all of the monoglucosylated glycoproteins that are synthesized in the ER. This Schistosoma mansoni (Blood fluke) protein is Calreticulin.